Consider the following 926-residue polypeptide: Ubiquitin carboxyl-terminal hydrolase 4 (926 aa).

The region spanning 205–328 (SQMEILLIDI…WLKSNYGRQV (124 aa)) is the Rhodanese domain. Ser-443 is modified (phosphoserine). The region spanning 562 to 923 (VGLENLGNSC…NAYVLFYHRV (362 aa)) is the USP domain. The active-site Nucleophile is Cys-571. His-880 functions as the Proton acceptor in the catalytic mechanism.

It belongs to the peptidase C19 family. In terms of assembly, interacts with BRO1, RFU1 and VPS32. Associates with the 26S proteasome.

The protein localises to the cytoplasm. It localises to the late endosome membrane. The catalysed reaction is Thiol-dependent hydrolysis of ester, thioester, amide, peptide and isopeptide bonds formed by the C-terminal Gly of ubiquitin (a 76-residue protein attached to proteins as an intracellular targeting signal).. With respect to regulation, RFU1 is an inhibitor of deubiquitination activity. Its function is as follows. Ubiquitin thioesterase that acts at the late endosome/prevacuolar compartment to recover ubiquitin from ubiquitinated membrane proteins en route to the vacuole. Also removes ubiquitin from soluble proteins targeted to proteasomes. Is essential to maintain a normal level of free ubiquitin. Involved in the ammonium-induced down-regulation of the GAP1 permease and the UME3 destruction in response to oxidative stress. Has a role in the RAD9 checkpoint response to TOP1 poisons. Required for promoting coordination of DNA replication and avoids DNA overreplication. This is Ubiquitin carboxyl-terminal hydrolase 4 (DOA4) from Saccharomyces cerevisiae (strain RM11-1a) (Baker's yeast).